A 448-amino-acid chain; its full sequence is UDP-N-acetylmuramoylalanine--D-glutamate ligase (448 aa).

An ATP-binding site is contributed by 112–118 (GSNAKST).

It belongs to the MurCDEF family.

Its subcellular location is the cytoplasm. It carries out the reaction UDP-N-acetyl-alpha-D-muramoyl-L-alanine + D-glutamate + ATP = UDP-N-acetyl-alpha-D-muramoyl-L-alanyl-D-glutamate + ADP + phosphate + H(+). Its pathway is cell wall biogenesis; peptidoglycan biosynthesis. Its function is as follows. Cell wall formation. Catalyzes the addition of glutamate to the nucleotide precursor UDP-N-acetylmuramoyl-L-alanine (UMA). In Acinetobacter baylyi (strain ATCC 33305 / BD413 / ADP1), this protein is UDP-N-acetylmuramoylalanine--D-glutamate ligase.